The sequence spans 370 residues: MMYQEAALLLALLFISSNVVLSAPVRDGLLPNGNFELGPKPSQMKGSVVKERTAVPNWNIIGFVEFIKSGQKQDDMVLVVPQGSSAVRLGNEASISQKISVLPGRLYSITFSAARTCAQDERLNISVTHESGVIPIQTMYGSDGWDSYSWAFKAGGPEIEIRFHNPGVEEHPACGPLIDAVAIKALFPPRFSGYNLIKNGNFEEGPYVFPTAKWGVLIPPFIEDDNSPLPGWMIESLKAVKYVDKAHFAVPEGHRAIELVGGKESAISQIVRTSLNKFYALTFNVGDARDGCEGPMIVEAFAGQGKVMVDYASKGKGGFRRGRLVFKAVSARTRVTFLSTFYHMKSDHSGSLCGPVIDDVRLVAVGKLRG.

The first 22 residues, 1-22 (MMYQEAALLLALLFISSNVVLS), serve as a signal peptide directing secretion. An N-linked (GlcNAc...) asparagine glycan is attached at N124.

In terms of tissue distribution, expressed at low levels in roots, seedlings and leaves.

It localises to the secreted. The protein resides in the cell wall. In Arabidopsis thaliana (Mouse-ear cress), this protein is Protein DUF642 L-GALACTONO-1,4-LACTONE-RESPONSIVE GENE 1.